A 207-amino-acid polypeptide reads, in one-letter code: Small ribosomal subunit protein uS4 (207 aa).

Positions 31-55 are disordered; the sequence is KCKLDSKPGQHGRTSGARTSDYGTQ. Residues 42-53 are compositionally biased toward polar residues; the sequence is GRTSGARTSDYG. One can recognise an S4 RNA-binding domain in the interval 97–160; that stretch reads SRLDNVVYRM…KKQARIVEAL (64 aa).

It belongs to the universal ribosomal protein uS4 family. As to quaternary structure, part of the 30S ribosomal subunit. Contacts protein S5. The interaction surface between S4 and S5 is involved in control of translational fidelity.

Its function is as follows. One of the primary rRNA binding proteins, it binds directly to 16S rRNA where it nucleates assembly of the body of the 30S subunit. In terms of biological role, with S5 and S12 plays an important role in translational accuracy. The chain is Small ribosomal subunit protein uS4 from Burkholderia lata (strain ATCC 17760 / DSM 23089 / LMG 22485 / NCIMB 9086 / R18194 / 383).